The primary structure comprises 180 residues: Bifunctional protein PyrR (180 aa).

A PRPP-binding motif is present at residues 101-113 (VILVDDVLYTGRT).

Belongs to the purine/pyrimidine phosphoribosyltransferase family. PyrR subfamily. In terms of assembly, homodimer and homohexamer; in equilibrium.

It carries out the reaction UMP + diphosphate = 5-phospho-alpha-D-ribose 1-diphosphate + uracil. Regulates transcriptional attenuation of the pyrimidine nucleotide (pyr) operon by binding in a uridine-dependent manner to specific sites on pyr mRNA. This disrupts an antiterminator hairpin in the RNA and favors formation of a downstream transcription terminator, leading to a reduced expression of downstream genes. In terms of biological role, also displays a weak uracil phosphoribosyltransferase activity which is not physiologically significant. The sequence is that of Bifunctional protein PyrR from Bacillus thuringiensis subsp. konkukian (strain 97-27).